Here is a 27-residue protein sequence, read N- to C-terminus: Conotoxin flf14b (27 aa).

Cystine bridges form between Cys6–Cys26 and Cys10–Cys22.

Expressed by the venom duct.

It localises to the secreted. The chain is Conotoxin flf14b from Conus anabathrum floridanus (Florida cone).